A 20-amino-acid chain; its full sequence is Mu-conotoxin SIIIB (20 aa).

Gln1 bears the Pyrrolidone carboxylic acid mark. Disulfide bonds link Cys3–Cys13, Cys4–Cys19, and Cys8–Cys20. Cys20 carries the post-translational modification Cysteine amide.

As to expression, expressed by the venom duct.

It is found in the secreted. In terms of biological role, mu-conotoxins block voltage-gated sodium channels (VGSC). Potently displaces (125)I-TIIIA from native rat brain Nav1.2/SCN2A (IC(50) is 5 nM) and muscle Nav1.4/SCN4A (IC(50) is 3 nM) VGSCs. Potently and irreversibly inhibits current through Xenopus oocyte-expressed Nav1.2/SCN2A and Nav1.4/SCN4A. This is Mu-conotoxin SIIIB from Conus striatus (Striated cone).